Here is a 188-residue protein sequence, read N- to C-terminus: uncharacterized protein (188 aa).

Residues alanine 121–glutamate 142 are disordered. Positions arginine 130–glutamate 142 are enriched in basic and acidic residues.

The protein belongs to the chlamydial CPn_0422/CT_273/TC_0545 family.

This is an uncharacterized protein from Chlamydia trachomatis serovar D (strain ATCC VR-885 / DSM 19411 / UW-3/Cx).